The primary structure comprises 476 residues: Aspartyl/glutamyl-tRNA(Asn/Gln) amidotransferase subunit B (476 aa).

It belongs to the GatB/GatE family. GatB subfamily. In terms of assembly, heterotrimer of A, B and C subunits.

It carries out the reaction L-glutamyl-tRNA(Gln) + L-glutamine + ATP + H2O = L-glutaminyl-tRNA(Gln) + L-glutamate + ADP + phosphate + H(+). The enzyme catalyses L-aspartyl-tRNA(Asn) + L-glutamine + ATP + H2O = L-asparaginyl-tRNA(Asn) + L-glutamate + ADP + phosphate + 2 H(+). Allows the formation of correctly charged Asn-tRNA(Asn) or Gln-tRNA(Gln) through the transamidation of misacylated Asp-tRNA(Asn) or Glu-tRNA(Gln) in organisms which lack either or both of asparaginyl-tRNA or glutaminyl-tRNA synthetases. The reaction takes place in the presence of glutamine and ATP through an activated phospho-Asp-tRNA(Asn) or phospho-Glu-tRNA(Gln). This Solidesulfovibrio magneticus (strain ATCC 700980 / DSM 13731 / RS-1) (Desulfovibrio magneticus) protein is Aspartyl/glutamyl-tRNA(Asn/Gln) amidotransferase subunit B.